The chain runs to 391 residues: Cell cycle checkpoint control protein RAD9A (391 aa).

Tyr-28 bears the Phosphotyrosine mark. A possesses 3'-5' exonuclease activity region spans residues 51–91; sequence FLFAPLFFQQYQAATPGQDLLRCKILMKSFLSVFRSLAMLE. Positions 266 to 391 are sufficient for interaction with ABL1; it reads SDTDSHSQDL…VLAEDSEGEG (126 aa). Positions 268–282 are enriched in basic and acidic residues; that stretch reads TDSHSQDLGSPERHQ. Disordered stretches follow at residues 268 to 301 and 319 to 391; these read TDSHSQDLGSPERHQPVPQLQAHSTPHPDDFAND and SRVL…EGEG. A phosphoserine mark is found at Ser-272, Ser-277, and Ser-328. Position 341 is a phosphoserine; by CK2 (Ser-341). Residues Ser-375 and Ser-380 each carry the phosphoserine modification. Phosphoserine; by CK2 is present on Ser-387.

Belongs to the rad9 family. Component of the toroidal 9-1-1 (RAD9-RAD1-HUS1) complex, composed of RAD9A, RAD1 and HUS1. The 9-1-1 complex associates with LIG1, POLB, FEN1, RAD17, HDAC1, RPA1 and RPA2. The 9-1-1 complex associates with the RAD17-RFC complex. RAD9A interacts with BCL2L1, FEN1, RAD9B, ABL1, RPA1, ATAD5 and RPA2. Interacts with DNAJC7. Interacts (when phosphorylated) with TOPBP1. Post-translationally, constitutively phosphorylated on serine and threonine amino acids in absence of DNA damage. Hyperphosphorylated by PRKCD and ABL1 upon DNA damage. Its phosphorylation by PRKCD may be required for the formation of the 9-1-1 complex. Phosphorylated at Ser-341 and Ser-387 by CK2, promoting interaction with TOPBP1.

The protein localises to the nucleus. It carries out the reaction Exonucleolytic cleavage in the 3'- to 5'-direction to yield nucleoside 5'-phosphates.. Its function is as follows. Component of the 9-1-1 cell-cycle checkpoint response complex that plays a major role in DNA repair. The 9-1-1 complex is recruited to DNA lesion upon damage by the RAD17-replication factor C (RFC) clamp loader complex. Acts then as a sliding clamp platform on DNA for several proteins involved in long-patch base excision repair (LP-BER). The 9-1-1 complex stimulates DNA polymerase beta (POLB) activity by increasing its affinity for the 3'-OH end of the primer-template and stabilizes POLB to those sites where LP-BER proceeds; endonuclease FEN1 cleavage activity on substrates with double, nick, or gap flaps of distinct sequences and lengths; and DNA ligase I (LIG1) on long-patch base excision repair substrates. The 9-1-1 complex is necessary for the recruitment of RHNO1 to sites of double-stranded breaks (DSB) occurring during the S phase. RAD9A possesses 3'-&gt;5' double stranded DNA exonuclease activity. The chain is Cell cycle checkpoint control protein RAD9A (RAD9A) from Homo sapiens (Human).